A 74-amino-acid chain; its full sequence is Lambda-hexatoxin-Hv1e (74 aa).

The signal sequence occupies residues 1 to 22 (MNTATCFIVLLVVATVIGGIEA). Residues 23-35 (GEFDMRKDVMGLF) constitute a propeptide that is removed on maturation. 4 disulfide bridges follow: cysteine 40–cysteine 54, cysteine 47–cysteine 59, cysteine 50–cysteine 51, and cysteine 53–cysteine 69.

It belongs to the neurotoxin 11 (kappa toxin) family. As to expression, expressed by the venom gland.

The protein localises to the secreted. Functionally, this excitatory toxin inhibits insect calcium-activated potassium (KCa) channels (Slo-type). This chain is Lambda-hexatoxin-Hv1e, found in Hadronyche versuta (Blue mountains funnel-web spider).